The following is a 1037-amino-acid chain: Sentrin-specific protease 7 (1037 aa).

Residues Met-1–Arg-10 show a composition bias toward basic residues. Disordered regions lie at residues Met-1 to Ala-27 and Ser-185 to Ser-399. 3 positions are modified to phosphoserine: Ser-12, Ser-13, and Ser-25. Positions Ser-192–Ser-208 are enriched in low complexity. A compositionally biased stretch (polar residues) spans Gly-272–Tyr-282. Basic residues predominate over residues Val-290–Ser-300. Composition is skewed to basic and acidic residues over residues Asn-301 to Glu-321 and Val-328 to Gln-341. The segment covering Ala-379–Ser-399 has biased composition (low complexity). Phosphoserine occurs at positions 434 and 435. Residues Leu-747–Cys-1037 form a protease region. The active site involves His-847. The segment at Gln-873 to Asn-909 is disordered. The segment covering Gln-880 to Pro-890 has biased composition (basic and acidic residues). Residues His-891–Asn-909 are compositionally biased toward polar residues. The active site involves Asp-926. Cys-979 functions as the Nucleophile in the catalytic mechanism.

This sequence belongs to the peptidase C48 family.

The protein localises to the cytoplasm. Its function is as follows. Protease that acts as a positive regulator of the cGAS-STING pathway by catalyzing desumoylation of CGAS. Desumoylation of CGAS promotes DNA-binding activity of CGAS, subsequent oligomerization and activation. Deconjugates SUMO2 and SUMO3 from targeted proteins, but not SUMO1. Catalyzes the deconjugation of poly-SUMO2 and poly-SUMO3 chains. Has very low efficiency in processing full-length SUMO proteins to their mature forms. This Mus musculus (Mouse) protein is Sentrin-specific protease 7.